The following is a 277-amino-acid chain: MVQRVVVSKLLNSSRPLVFGMIHVPALPGTPSNTLPMSAILKKVRKEADVYFKNGVDGVIVENMHDVPYVKPPASPEIVSSMALASDQLVKSRDAHHPAALTGIQILAAANREALAVAYTTGMDFIRAEGFVYSHVADEGWIDGCAGGLLRYRSSLKAENIAIFTDIKKKHSAHSVTSDVSIHEMAKDAKFNCADGVIVTGSATGSAASLEEMIQVMKVQEFPVLIGSGINGKNAREFVKAHGFIVGSDFKIGGEWKNDLDSGRISKFMKHVNTLKR.

This sequence belongs to the BtpA family.

The protein localises to the mitochondrion. This is an uncharacterized protein from Caenorhabditis elegans.